A 285-amino-acid polypeptide reads, in one-letter code: MKYIGAHVSAAGGLANAAIRAAEIDATAFALFTKNQRQWRAAPLTTQTIDEFKAACEKYHYTSAQILPHDSYLINLGHPVTEALEKSRDAFIDEMQRCEQLGLSLLNFHPGSHLMQISEEDCLARIAESINIALDKTQGVTAVIENTAGQGSNLGFKFEHLAAIIDGVEDKSRVGVCIDTCHAFAAGYDLRTPAECEKTFADFARIVGFKYLRGMHLNDAKSTFGSRVDRHHSLGEGNIGHDAFRWIMQNDRFDGIPLILETINPDIWAEEIAWLKAQQTEKAVA.

The Zn(2+) site is built by His69, His109, Glu145, Asp179, His182, His216, Asp229, His231, and Glu261.

It belongs to the AP endonuclease 2 family. It depends on Zn(2+) as a cofactor.

It catalyses the reaction Endonucleolytic cleavage to 5'-phosphooligonucleotide end-products.. Endonuclease IV plays a role in DNA repair. It cleaves phosphodiester bonds at apurinic or apyrimidinic (AP) sites, generating a 3'-hydroxyl group and a 5'-terminal sugar phosphate. The sequence is that of Probable endonuclease 4 from Shigella flexneri serotype 5b (strain 8401).